The following is a 159-amino-acid chain: ATP synthase subunit b (159 aa).

The chain crosses the membrane as a helical span at residues 7 to 27 (VIFMTIINFCILVAILKHFFW).

This sequence belongs to the ATPase B chain family. As to quaternary structure, F-type ATPases have 2 components, F(1) - the catalytic core - and F(0) - the membrane proton channel. F(1) has five subunits: alpha(3), beta(3), gamma(1), delta(1), epsilon(1). F(0) has three main subunits: a(1), b(2) and c(10-14). The alpha and beta chains form an alternating ring which encloses part of the gamma chain. F(1) is attached to F(0) by a central stalk formed by the gamma and epsilon chains, while a peripheral stalk is formed by the delta and b chains.

Its subcellular location is the cell membrane. Functionally, f(1)F(0) ATP synthase produces ATP from ADP in the presence of a proton or sodium gradient. F-type ATPases consist of two structural domains, F(1) containing the extramembraneous catalytic core and F(0) containing the membrane proton channel, linked together by a central stalk and a peripheral stalk. During catalysis, ATP synthesis in the catalytic domain of F(1) is coupled via a rotary mechanism of the central stalk subunits to proton translocation. Its function is as follows. Component of the F(0) channel, it forms part of the peripheral stalk, linking F(1) to F(0). This is ATP synthase subunit b from Clostridium botulinum (strain Alaska E43 / Type E3).